A 761-amino-acid chain; its full sequence is Protein transport protein SEC23 C (761 aa).

Residues Cys60, Cys63, Cys82, and Cys85 each contribute to the Zn(2+) site. Positions 60–85 are zinc finger-like; it reads CRTCRSVLNPYSVVDFSACNWGCPFC.

This sequence belongs to the SEC23/SEC24 family. SEC24 subfamily. In terms of assembly, component of the coat protein complex II (COPII), composed of at least five proteins: the Sec23/24 complex, the Sec13/31 complex and Sar1.

The protein localises to the cytoplasmic vesicle. It is found in the COPII-coated vesicle membrane. Its subcellular location is the endoplasmic reticulum membrane. It localises to the membrane. Its function is as follows. Component of the coat protein complex II (COPII) which promotes the formation of transport vesicles from the endoplasmic reticulum (ER). The coat has two main functions, the physical deformation of the endoplasmic reticulum membrane into vesicles and the selection of cargo molecules. In Arabidopsis thaliana (Mouse-ear cress), this protein is Protein transport protein SEC23 C.